A 339-amino-acid polypeptide reads, in one-letter code: Protein RecA (339 aa).

An ATP-binding site is contributed by 66–73; the sequence is GPESSGKT.

It belongs to the RecA family.

It is found in the cytoplasm. Functionally, can catalyze the hydrolysis of ATP in the presence of single-stranded DNA, the ATP-dependent uptake of single-stranded DNA by duplex DNA, and the ATP-dependent hybridization of homologous single-stranded DNAs. It interacts with LexA causing its activation and leading to its autocatalytic cleavage. The sequence is that of Protein RecA from Geobacter metallireducens (strain ATCC 53774 / DSM 7210 / GS-15).